We begin with the raw amino-acid sequence, 341 residues long: tRNA N6-adenosine threonylcarbamoyltransferase (341 aa).

Positions 111 and 115 each coordinate Fe cation. Substrate is bound by residues 134–138 (LVSGG), D167, G180, and N272. D300 is a binding site for Fe cation.

Belongs to the KAE1 / TsaD family. Requires Fe(2+) as cofactor.

The protein localises to the cytoplasm. The enzyme catalyses L-threonylcarbamoyladenylate + adenosine(37) in tRNA = N(6)-L-threonylcarbamoyladenosine(37) in tRNA + AMP + H(+). Its function is as follows. Required for the formation of a threonylcarbamoyl group on adenosine at position 37 (t(6)A37) in tRNAs that read codons beginning with adenine. Is involved in the transfer of the threonylcarbamoyl moiety of threonylcarbamoyl-AMP (TC-AMP) to the N6 group of A37, together with TsaE and TsaB. TsaD likely plays a direct catalytic role in this reaction. In Blochmanniella pennsylvanica (strain BPEN), this protein is tRNA N6-adenosine threonylcarbamoyltransferase.